The chain runs to 341 residues: S-adenosylmethionine:tRNA ribosyltransferase-isomerase (341 aa).

Belongs to the QueA family. As to quaternary structure, monomer.

Its subcellular location is the cytoplasm. The enzyme catalyses 7-aminomethyl-7-carbaguanosine(34) in tRNA + S-adenosyl-L-methionine = epoxyqueuosine(34) in tRNA + adenine + L-methionine + 2 H(+). It functions in the pathway tRNA modification; tRNA-queuosine biosynthesis. Transfers and isomerizes the ribose moiety from AdoMet to the 7-aminomethyl group of 7-deazaguanine (preQ1-tRNA) to give epoxyqueuosine (oQ-tRNA). The protein is S-adenosylmethionine:tRNA ribosyltransferase-isomerase of Chlorobium luteolum (strain DSM 273 / BCRC 81028 / 2530) (Pelodictyon luteolum).